Here is a 267-residue protein sequence, read N- to C-terminus: Interleukin-2 receptor subunit alpha (267 aa).

Residues 1–21 (MEPHLLMLGFLSFTIVPGCWA) form the signal peptide. Residues 22 to 79 (ELCLYDPPEVPNATFKALSYKNGTILNCECKRGFRRLNELVYMACLGNSWSNNCQCTS) form the Sushi 1 domain. The Extracellular segment spans residues 22–235 (ELCLYDPPEV…ETFVFTKEYQ (214 aa)). 3 cysteine pairs are disulfide-bonded: C24–C66, C49–C75, and C51–C77. N-linked (GlcNAc...) asparagine glycosylation is found at N33 and N43. Positions 82-93 (HDNSREQVTPQP) are enriched in polar residues. The segment at 82 to 108 (HDNSREQVTPQPEGQKEQQTTDTQKST) is disordered. A compositionally biased stretch (low complexity) spans 98 to 108 (EQQTTDTQKST). The Sushi 2 domain maps to 118–181 (GHCREPPPWR…WTHPQLTCVD (64 aa)). Cystine bridges form between C120–C163 and C147–C179. Positions 191–215 (SEESQGSRNSFPESEASCPTPNTDF) are disordered. Positions 192–215 (EESQGSRNSFPESEASCPTPNTDF) are enriched in polar residues. A helical membrane pass occupies residues 236–256 (VAVASCIFLLLSILLLSGFTW). The Cytoplasmic portion of the chain corresponds to 257–267 (QHRWRKSRRTI).

As to quaternary structure, non-covalent dimer of an alpha and a beta subunit. IL2R exists in 3 different forms: a high affinity dimer, an intermediate affinity monomer (beta subunit), and a low affinity monomer (alpha subunit). The high and intermediate affinity forms also associate with a gamma subunit.

It is found in the membrane. Receptor for interleukin-2. The receptor is involved in the regulation of immune tolerance by controlling regulatory T cells (TREGs) activity. TREGs suppress the activation and expansion of autoreactive T-cells. The polypeptide is Interleukin-2 receptor subunit alpha (Il2ra) (Rattus norvegicus (Rat)).